Reading from the N-terminus, the 25-residue chain is Small ribosomal subunit protein eS32 (25 aa).

The disordered stretch occupies residues 1 to 25; the sequence is MREKWKKKRSRRLRRKRRKMRARSK.

This sequence belongs to the eukaryotic ribosomal protein eS32 family. As to quaternary structure, component of the large ribosomal subunit.

This chain is Small ribosomal subunit protein eS32 (rpl41), found in Agaricus bisporus (White button mushroom).